The primary structure comprises 205 residues: Guanylate kinase (205 aa).

One can recognise a Guanylate kinase-like domain in the interval 18–196 (PKLFTISAPA…AYQVLRSIFI (179 aa)). Residue 25 to 32 (APAGAGKT) coordinates ATP.

It belongs to the guanylate kinase family.

The protein localises to the cytoplasm. The catalysed reaction is GMP + ATP = GDP + ADP. Essential for recycling GMP and indirectly, cGMP. This Chlamydia muridarum (strain MoPn / Nigg) protein is Guanylate kinase (gmk).